The chain runs to 68 residues: ATP synthase subunit c (68 aa).

The next 2 membrane-spanning stretches (helical) occupy residues 4–24 (IAAAIAIGLSALGAGIGNGLI) and 45–65 (IMFIGIGLVEALPIIGVVIAF).

This sequence belongs to the ATPase C chain family. As to quaternary structure, F-type ATPases have 2 components, F(1) - the catalytic core - and F(0) - the membrane proton channel. F(1) has five subunits: alpha(3), beta(3), gamma(1), delta(1), epsilon(1). F(0) has three main subunits: a(1), b(2) and c(10-14). The alpha and beta chains form an alternating ring which encloses part of the gamma chain. F(1) is attached to F(0) by a central stalk formed by the gamma and epsilon chains, while a peripheral stalk is formed by the delta and b chains.

The protein localises to the cell membrane. F(1)F(0) ATP synthase produces ATP from ADP in the presence of a proton or sodium gradient. F-type ATPases consist of two structural domains, F(1) containing the extramembraneous catalytic core and F(0) containing the membrane proton channel, linked together by a central stalk and a peripheral stalk. During catalysis, ATP synthesis in the catalytic domain of F(1) is coupled via a rotary mechanism of the central stalk subunits to proton translocation. In terms of biological role, key component of the F(0) channel; it plays a direct role in translocation across the membrane. A homomeric c-ring of between 10-14 subunits forms the central stalk rotor element with the F(1) delta and epsilon subunits. The protein is ATP synthase subunit c of Staphylococcus saprophyticus subsp. saprophyticus (strain ATCC 15305 / DSM 20229 / NCIMB 8711 / NCTC 7292 / S-41).